Consider the following 341-residue polypeptide: Methionine import ATP-binding protein MetN (341 aa).

In terms of domain architecture, ABC transporter spans 2–237 (IELCGLKKSF…PESLARKMLY (236 aa)). Position 34-41 (34-41 (GKSGAGKS)) interacts with ATP.

The protein belongs to the ABC transporter superfamily. Methionine importer (TC 3.A.1.24) family. As to quaternary structure, the complex is composed of two ATP-binding proteins (MetN), two transmembrane proteins (MetI) and a solute-binding protein (MetQ).

The protein resides in the cell inner membrane. The catalysed reaction is L-methionine(out) + ATP + H2O = L-methionine(in) + ADP + phosphate + H(+). The enzyme catalyses D-methionine(out) + ATP + H2O = D-methionine(in) + ADP + phosphate + H(+). Its function is as follows. Part of the ABC transporter complex MetNIQ involved in methionine import. Responsible for energy coupling to the transport system. This is Methionine import ATP-binding protein MetN from Legionella pneumophila (strain Paris).